The sequence spans 610 residues: Dapper homolog 3 (610 aa).

The residue at position 6 (Ser-6) is a Phosphoserine. 3 disordered regions span residues 50–76, 102–179, and 200–579; these read PGMGGAEAEDEEDAEEDEDAAAARRAA, LESG…SVGA, and TCSS…PAGP. A compositionally biased stretch (acidic residues) spans 56–69; that stretch reads EAEDEEDAEEDEDA. A coiled-coil region spans residues 63–87; the sequence is AEEDEDAAAARRAAAALEEQLEALP. Residues 120-138 show a composition bias toward low complexity; it reads DPSSTGGPDSPPSTFCGDS. Phosphoserine is present on residues Ser-165 and Ser-237. Arg-255 carries the omega-N-methylarginine modification. A compositionally biased stretch (pro residues) spans 317-331; sequence PPEPAPPAAASPPSS. Residues 344–356 are compositionally biased toward low complexity; that stretch reads PGAPAASRGLPGR. Ser-409 and Ser-456 each carry phosphoserine. Pro residues predominate over residues 475 to 485; that stretch reads PRGPAPSPSAP. Over residues 524–545 the composition is skewed to low complexity; the sequence is ESESSASEGESPAFSSASSDSD. Positions 566–576 are enriched in gly residues; it reads GPGGAAGGGTP. The PDZ-binding motif lies at 607-610; it reads MTTV.

It belongs to the dapper family. Can form homodimers and heterodimers with DACT1 or DACT3. Interacts with CSNK1D, PKA catalytic subunit, PKC-type kinase, DVL1, DVL2, DVL3, VANGL1, VANGL2 and CTNND1. In terms of tissue distribution, expressed in brain and uterus.

May be involved in regulation of intracellular signaling pathways during development. Specifically thought to play a role in canonical and/or non-canonical Wnt signaling pathways through interaction with DSH (Dishevelled) family proteins. The sequence is that of Dapper homolog 3 (Dact3) from Mus musculus (Mouse).